The primary structure comprises 529 residues: Bifunctional purine biosynthesis protein PurH (529 aa).

The MGS-like domain maps to 1–148; sequence MQQRRPVRRA…KNHKDVAIVV (148 aa).

Belongs to the PurH family.

It catalyses the reaction (6R)-10-formyltetrahydrofolate + 5-amino-1-(5-phospho-beta-D-ribosyl)imidazole-4-carboxamide = 5-formamido-1-(5-phospho-D-ribosyl)imidazole-4-carboxamide + (6S)-5,6,7,8-tetrahydrofolate. The enzyme catalyses IMP + H2O = 5-formamido-1-(5-phospho-D-ribosyl)imidazole-4-carboxamide. Its pathway is purine metabolism; IMP biosynthesis via de novo pathway; 5-formamido-1-(5-phospho-D-ribosyl)imidazole-4-carboxamide from 5-amino-1-(5-phospho-D-ribosyl)imidazole-4-carboxamide (10-formyl THF route): step 1/1. It functions in the pathway purine metabolism; IMP biosynthesis via de novo pathway; IMP from 5-formamido-1-(5-phospho-D-ribosyl)imidazole-4-carboxamide: step 1/1. This is Bifunctional purine biosynthesis protein PurH from Salmonella dublin (strain CT_02021853).